The following is a 2048-amino-acid chain: Myoferlin (2048 aa).

In terms of domain architecture, C2 1 spans 1–101 (MLRVIVESAT…IGDQNRSLPY (101 aa)). Over 1–2012 (MLRVIVESAT…MRFIVWRRFK (2012 aa)) the chain is Cytoplasmic. A disordered region spans residues 124–176 (YTPPSAPHPNDPSGTSVPGMGEEEEEDQGDEDRVDGIVRGPGPKGPSGTVSEA). Over residues 144-156 (GEEEEEDQGDEDR) the composition is skewed to acidic residues. Residues S170 and S174 each carry the phosphoserine modification. C2 domains lie at 183 to 300 (TKGK…RKWL) and 339 to 475 (DSDD…EATT). A necessary for interaction with EHD2 region spans residues 186–281 (KSSRRMLSNK…RADCLMGEFK (96 aa)). Residues D390, D396, D444, D446, and D452 each coordinate Ca(2+). Residues K540 and K871 each carry the N6-acetyllysine modification. C2 domains are found at residues 1110-1238 (GANT…LLWH) and 1269-1397 (LPSQ…GKED). The Ca(2+) site is built by D1142, D1148, D1204, and D1206. K1494 is modified (N6-acetyllysine). C2 domains lie at 1523-1641 (PAPP…SHCG) and 1759-1907 (GPPG…EKCS). Residues D1556, D1562, D1611, D1613, D1878, S1881, and D1884 each coordinate Ca(2+). Basic and acidic residues predominate over residues 1964-1975 (EADERPAGKGRS). A disordered region spans residues 1964–1986 (EADERPAGKGRSEPNMNPKLDPP). Residues 2013-2033 (WVIIGLLLLLILLLFVAVLLY) traverse the membrane as a helical segment. Over 2034–2048 (SLPNYLSMKIVRPNA) the chain is Extracellular.

The protein belongs to the ferlin family. As to quaternary structure, interacts with EHD1. Interacts with EHD2; the interaction is direct. Interacts with DNM2 and KDR. Interacts with RIPOR2. Ca(2+) is required as a cofactor. Expressed in myoblasts (at protein level). Expressed in endothelial cells.

The protein resides in the cell membrane. Its subcellular location is the nucleus membrane. The protein localises to the cytoplasmic vesicle membrane. Calcium/phospholipid-binding protein that plays a role in the plasmalemma repair mechanism of endothelial cells that permits rapid resealing of membranes disrupted by mechanical stress. Involved in endocytic recycling. Implicated in VEGF signal transduction by regulating the levels of the receptor KDR. The protein is Myoferlin (Myof) of Mus musculus (Mouse).